The sequence spans 345 residues: Phosphoribosylformylglycinamidine cyclo-ligase (345 aa).

The protein belongs to the AIR synthase family.

It localises to the cytoplasm. It carries out the reaction 2-formamido-N(1)-(5-O-phospho-beta-D-ribosyl)acetamidine + ATP = 5-amino-1-(5-phospho-beta-D-ribosyl)imidazole + ADP + phosphate + H(+). It participates in purine metabolism; IMP biosynthesis via de novo pathway; 5-amino-1-(5-phospho-D-ribosyl)imidazole from N(2)-formyl-N(1)-(5-phospho-D-ribosyl)glycinamide: step 2/2. The chain is Phosphoribosylformylglycinamidine cyclo-ligase from Prochlorococcus marinus (strain MIT 9211).